Here is an 87-residue protein sequence, read N- to C-terminus: Antitoxin epsilon (87 aa).

The protein belongs to the epsilon antitoxin family. In terms of assembly, in the presence of the zeta toxin, forms an inactive PezA(2)PezT(2) heterotetramer.

In terms of biological role, antitoxin component of a type II toxin-antitoxin (TA) system. Neutralizes the toxic effect of cognate zeta toxin. Part of a postsegregational killing (PSK) system involved in the killing of plasmid-free cells. Continuous synthesis of the epsilon antitoxin is required to counteract the zeta toxin. This is Antitoxin epsilon from Lactococcus lactis subsp. lactis (Streptococcus lactis).